Reading from the N-terminus, the 298-residue chain is tRNA dimethylallyltransferase (298 aa).

Position 16–23 (16–23 (GPTASGKS)) interacts with ATP. 18–23 (TASGKS) serves as a coordination point for substrate. 2 interaction with substrate tRNA regions span residues 41–44 (DSMQ) and 165–169 (QRIVR).

It belongs to the IPP transferase family. As to quaternary structure, monomer. Mg(2+) serves as cofactor.

The catalysed reaction is adenosine(37) in tRNA + dimethylallyl diphosphate = N(6)-dimethylallyladenosine(37) in tRNA + diphosphate. Catalyzes the transfer of a dimethylallyl group onto the adenine at position 37 in tRNAs that read codons beginning with uridine, leading to the formation of N6-(dimethylallyl)adenosine (i(6)A). This chain is tRNA dimethylallyltransferase, found in Rhizobium radiobacter (Agrobacterium tumefaciens).